Reading from the N-terminus, the 249-residue chain is Myelin protein P0 (249 aa).

Residues 1–29 (MALGAIGDGRLLLLLVGLLSASGPSPTLA) form the signal peptide. The 114-residue stretch at 30–143 (IHVYTPREVY…DIVGKSSQVT (114 aa)) folds into the Ig-like V-type domain. The Extracellular portion of the chain corresponds to 30–153 (IHVYTPREVY…LYVLEKVPTR (124 aa)). Residues Cys-50 and Cys-127 are joined by a disulfide bond. N-linked (GlcNAc...) asparagine glycosylation is present at Asn-122. Residues 154-179 (YGVVLGSIIGGVLLLVALLVAVVYLV) form a helical membrane-spanning segment. Residues 180-249 (RFCWLRRQAV…APGEARKDKK (70 aa)) are Cytoplasmic-facing. A disordered region spans residues 227–249 (RSAKAAAEKKSKGAPGEARKDKK).

Belongs to the myelin P0 protein family. Found only in peripheral nervous system Schwann cells.

It localises to the cell membrane. Functionally, is an adhesion molecule necessary for normal myelination in the peripheral nervous system. It mediates adhesion between adjacent myelin wraps and ultimately drives myelin compaction. The polypeptide is Myelin protein P0 (MPZ) (Gallus gallus (Chicken)).